The primary structure comprises 319 residues: Thioredoxin reductase (319 aa).

Residue 36-43 (TGINKGGQ) participates in FAD binding. Residues Cys136 and Cys139 are joined by a disulfide bond. 288–297 (DVIDHVYRQA) contributes to the FAD binding site.

This sequence belongs to the class-II pyridine nucleotide-disulfide oxidoreductase family. Homodimer. The cofactor is FAD.

The protein resides in the cytoplasm. It catalyses the reaction [thioredoxin]-dithiol + NADP(+) = [thioredoxin]-disulfide + NADPH + H(+). The protein is Thioredoxin reductase (trxB) of Buchnera aphidicola subsp. Schizaphis graminum (strain Sg).